A 264-amino-acid polypeptide reads, in one-letter code: 3-methyl-2-oxobutanoate hydroxymethyltransferase (264 aa).

Asp45 and Asp84 together coordinate Mg(2+). Residues Asp45–Ser46, Asp84, and Lys112 contribute to the 3-methyl-2-oxobutanoate site. Glu114 serves as a coordination point for Mg(2+). The active-site Proton acceptor is the Glu181.

It belongs to the PanB family. As to quaternary structure, homodecamer; pentamer of dimers. Mg(2+) serves as cofactor.

It localises to the cytoplasm. It carries out the reaction 3-methyl-2-oxobutanoate + (6R)-5,10-methylene-5,6,7,8-tetrahydrofolate + H2O = 2-dehydropantoate + (6S)-5,6,7,8-tetrahydrofolate. Its pathway is cofactor biosynthesis; (R)-pantothenate biosynthesis; (R)-pantoate from 3-methyl-2-oxobutanoate: step 1/2. In terms of biological role, catalyzes the reversible reaction in which hydroxymethyl group from 5,10-methylenetetrahydrofolate is transferred onto alpha-ketoisovalerate to form ketopantoate. This Pseudoalteromonas translucida (strain TAC 125) protein is 3-methyl-2-oxobutanoate hydroxymethyltransferase.